Reading from the N-terminus, the 566-residue chain is Malate synthase, glyoxysomal (566 aa).

Residue arginine 182 is the Proton acceptor of the active site. Aspartate 467 functions as the Proton donor in the catalytic mechanism. The Microbody targeting signal signature appears at 564 to 566; the sequence is SRL.

The protein belongs to the malate synthase family.

It is found in the glyoxysome. It carries out the reaction glyoxylate + acetyl-CoA + H2O = (S)-malate + CoA + H(+). It functions in the pathway carbohydrate metabolism; glyoxylate cycle; (S)-malate from isocitrate: step 2/2. The polypeptide is Malate synthase, glyoxysomal (Cucurbita maxima (Pumpkin)).